A 168-amino-acid polypeptide reads, in one-letter code: Oocyte-secreted protein 2 (168 aa).

An N-terminal signal peptide occupies residues 1–21 (MGVSMALEVLVYLAVLVWTCA).

Belongs to the PLAC1 family. As to expression, expressed in ovaries. Highly expressed in the germinal vesicles oocytes and metaphase II oocytes.

It is found in the secreted. Its subcellular location is the cytoplasm. This chain is Oocyte-secreted protein 2 (Oosp2), found in Mus musculus (Mouse).